A 454-amino-acid chain; its full sequence is Nucleoprotein (454 aa).

Positions 1–62 are disordered; sequence MSFVPGQENA…ATTQPNSGSV (62 aa). Positions 11-21 are enriched in low complexity; that stretch reads GSRSSSGSRSG. Over residues 49-61 the composition is skewed to polar residues; it reads PKQTATTQPNSGS. Residues 56 to 197 are RNA-binding; the sequence is QPNSGSVVPH…GFYVEGSGRS (142 aa). The CoV N NTD domain maps to 64–193; the sequence is PHYSWFSGIT…VLPQGFYVEG (130 aa). Residues Arg109, Arg125, and Arg167 each coordinate RNA. 3 disordered regions span residues 159-230, 249-292, and 382-428; these read KTTA…STVK, AGQP…KRGP, and DGGA…RELT. At Ser170 the chain carries Phosphoserine; by host. Phosphothreonine; by host is present on Thr177. The segment covering 193-212 has biased composition (low complexity); it reads GSGRSAPASRSGSRSQSRGP. The residue at position 194 (Ser194) is a Phosphoserine; by host. Polar residues predominate over residues 215–227; that stretch reads RARSSSNQRQPAS. In terms of domain architecture, CoV N CTD spans 260–383; the sequence is AKEVRQKILN…ENLNAYQKDG (124 aa). The span at 267–277 shows a compositional bias: basic residues; that stretch reads ILNKPRQKRTP. The tract at residues 267 to 383 is dimerization; sequence ILNKPRQKRT…ENLNAYQKDG (117 aa). Phosphoserine; by host is present on residues Ser389 and Ser424. Phosphothreonine; by host is present on Thr428.

The protein belongs to the betacoronavirus nucleocapsid protein family. In terms of assembly, homooligomer. Both monomeric and oligomeric forms interact with RNA. Interacts with protein M. Interacts with NSP3; this interaction serves to tether the genome to the newly translated replicase-transcriptase complex at a very early stage of infection. ADP-ribosylated. The ADP-ribosylation is retained in the virion during infection. In terms of processing, phosphorylated on serine and threonine residues.

It is found in the virion. It localises to the host endoplasmic reticulum-Golgi intermediate compartment. The protein localises to the host Golgi apparatus. Functionally, packages the positive strand viral genome RNA into a helical ribonucleocapsid (RNP) and plays a fundamental role during virion assembly through its interactions with the viral genome and membrane protein M. Plays an important role in enhancing the efficiency of subgenomic viral RNA transcription as well as viral replication. In Murine coronavirus (strain S) (MHV-S), this protein is Nucleoprotein.